The sequence spans 139 residues: Large ribosomal subunit protein uL16 (139 aa).

The protein belongs to the universal ribosomal protein uL16 family. As to quaternary structure, part of the 50S ribosomal subunit.

Its function is as follows. Binds 23S rRNA and is also seen to make contacts with the A and possibly P site tRNAs. The sequence is that of Large ribosomal subunit protein uL16 from Chlorobium phaeobacteroides (strain BS1).